The following is a 485-amino-acid chain: tRNA sulfurtransferase (485 aa).

The 105-residue stretch at 61–165 folds into the THUMP domain; that stretch reads EELIALLQRI…DDKMMLVKAR (105 aa). ATP contacts are provided by residues 183 to 184, lysine 265, glycine 287, and glutamine 296; that span reads LI. An intrachain disulfide couples cysteine 344 to cysteine 456. Residues 404–483 enclose the Rhodanese domain; it reads LGENEVILDI…FSNVRVFAKN (80 aa). Cysteine 456 serves as the catalytic Cysteine persulfide intermediate.

This sequence belongs to the ThiI family.

It is found in the cytoplasm. It carries out the reaction [ThiI sulfur-carrier protein]-S-sulfanyl-L-cysteine + a uridine in tRNA + 2 reduced [2Fe-2S]-[ferredoxin] + ATP + H(+) = [ThiI sulfur-carrier protein]-L-cysteine + a 4-thiouridine in tRNA + 2 oxidized [2Fe-2S]-[ferredoxin] + AMP + diphosphate. It catalyses the reaction [ThiS sulfur-carrier protein]-C-terminal Gly-Gly-AMP + S-sulfanyl-L-cysteinyl-[cysteine desulfurase] + AH2 = [ThiS sulfur-carrier protein]-C-terminal-Gly-aminoethanethioate + L-cysteinyl-[cysteine desulfurase] + A + AMP + 2 H(+). Its pathway is cofactor biosynthesis; thiamine diphosphate biosynthesis. Catalyzes the ATP-dependent transfer of a sulfur to tRNA to produce 4-thiouridine in position 8 of tRNAs, which functions as a near-UV photosensor. Also catalyzes the transfer of sulfur to the sulfur carrier protein ThiS, forming ThiS-thiocarboxylate. This is a step in the synthesis of thiazole, in the thiamine biosynthesis pathway. The sulfur is donated as persulfide by IscS. This is tRNA sulfurtransferase from Haemophilus influenzae (strain PittGG).